We begin with the raw amino-acid sequence, 400 residues long: Argininosuccinate synthase (400 aa).

ATP is bound by residues Ala-10 to Ser-18 and Ala-38. Residue Tyr-89 coordinates L-citrulline. Gly-119 serves as a coordination point for ATP. Residues Thr-121, Asn-125, and Asp-126 each coordinate L-aspartate. Asn-125 provides a ligand contact to L-citrulline. 5 residues coordinate L-citrulline: Arg-129, Ser-177, Ser-186, Glu-262, and Tyr-274.

This sequence belongs to the argininosuccinate synthase family. Type 1 subfamily. As to quaternary structure, homotetramer.

The protein resides in the cytoplasm. It catalyses the reaction L-citrulline + L-aspartate + ATP = 2-(N(omega)-L-arginino)succinate + AMP + diphosphate + H(+). Its pathway is amino-acid biosynthesis; L-arginine biosynthesis; L-arginine from L-ornithine and carbamoyl phosphate: step 2/3. The polypeptide is Argininosuccinate synthase (Nostoc sp. (strain PCC 7120 / SAG 25.82 / UTEX 2576)).